Here is a 1704-residue protein sequence, read N- to C-terminus: Villidin (1704 aa).

WD repeat units lie at residues 82–122 (GHTD…LIKD), 133–173 (KQQK…EQSS), 180–221 (GHED…TPIQ), and 225–271 (THEG…SSQP). Disordered regions lie at residues 439–460 (IGNS…DSPF) and 606–721 (SVPS…NSST). A compositionally biased stretch (gly residues) spans 442-456 (SGSGGGGGDGDGNGG). The PH 1 domain maps to 459-563 (PFITEGIVKQ…WCQSINAYRE (105 aa)). Composition is skewed to low complexity over residues 613–636 (QQQQ…TPTQ), 651–701 (SLKS…SSSS), and 709–721 (NNST…NSST). 2 consecutive PH domains span residues 727-828 (DIVI…QNLK) and 871-969 (EQPL…AARK). Residues 848-877 (LISSPMSDDESNTNEGGVEEEEEEQPLEGQ) form a disordered region. A compositionally biased stretch (acidic residues) spans 854–873 (SDDESNTNEGGVEEEEEEQP). Gelsolin-like repeat units lie at residues 1025–1119 (KQKI…LGGN), 1138–1241 (IKTT…FANY), 1293–1390 (GRVK…FKTK), 1404–1494 (KKPS…FEST), and 1520–1615 (RFFV…FRAW). The region spanning 1641–1704 (DYLKEIYTYE…EGIKKELFLF (64 aa)) is the HP domain.

It is found in the membrane. Its subcellular location is the cytoplasm. It localises to the cytoskeleton. Functionally, may function as a linker between membranes and the actin cytoskeleton. This is Villidin (vilA) from Dictyostelium discoideum (Social amoeba).